The sequence spans 467 residues: UDP-N-acetylmuramate--L-alanine ligase (467 aa).

G121–T127 contacts ATP.

This sequence belongs to the MurCDEF family.

The protein localises to the cytoplasm. The enzyme catalyses UDP-N-acetyl-alpha-D-muramate + L-alanine + ATP = UDP-N-acetyl-alpha-D-muramoyl-L-alanine + ADP + phosphate + H(+). It participates in cell wall biogenesis; peptidoglycan biosynthesis. Cell wall formation. This is UDP-N-acetylmuramate--L-alanine ligase from Parasynechococcus marenigrum (strain WH8102).